Here is a 310-residue protein sequence, read N- to C-terminus: E3 ubiquitin-protein ligase CSU1 (310 aa).

The segment at 43–67 (CSLCLKPFIDPMCCHKGHVFCRECI) adopts an RING-type 1; degenerate zinc-finger fold. Residues 75–95 (KKDIQRRLAAHSSQKKQDKDE) adopt a coiled-coil conformation. The segment at 110–138 (EFDQQNHSAMPRNSDKNHNEDKNGFHGAN) is disordered. A compositionally biased stretch (basic and acidic residues) spans 122–133 (NSDKNHNEDKNG). The RING-type 2 zinc-finger motif lies at 221-263 (CPSCKVTLTNTMSLVALSSCGHVFCKKCAEKFMPVDKVCLVCD).

Belongs to the NOSIP family.

The protein resides in the nucleus. It is found in the nucleus speckle. It carries out the reaction S-ubiquitinyl-[E2 ubiquitin-conjugating enzyme]-L-cysteine + [acceptor protein]-L-lysine = [E2 ubiquitin-conjugating enzyme]-L-cysteine + N(6)-ubiquitinyl-[acceptor protein]-L-lysine.. The protein operates within protein modification; protein ubiquitination. In terms of biological role, RING-finger E3 ubiquitin-protein ligase that plays an major role in maintaining COP1 homeostasis in darkness. Negatively regulates COP1 protein accumulation by targeting COP1 for ubiquitination and subsequent proteasomal degradation in dark-grown seedlings. Negatively regulates the accumulation of SPA1 protein in the dark. The polypeptide is E3 ubiquitin-protein ligase CSU1 (Arabidopsis thaliana (Mouse-ear cress)).